A 170-amino-acid chain; its full sequence is Ubiquitin-conjugating enzyme E2 2 (170 aa).

The region spanning 4-150 (PARRRLMRDF…VKETVEKSWE (147 aa)) is the UBC core domain. Cys88 acts as the Glycyl thioester intermediate in catalysis. The segment at 148–170 (SWEDDLKDMDDGDDDDDDDDDDD) is disordered. Positions 152-170 (DLKDMDDGDDDDDDDDDDD) are enriched in acidic residues.

Belongs to the ubiquitin-conjugating enzyme family.

The protein localises to the cytoplasm. It is found in the nucleus. It carries out the reaction S-ubiquitinyl-[E1 ubiquitin-activating enzyme]-L-cysteine + [E2 ubiquitin-conjugating enzyme]-L-cysteine = [E1 ubiquitin-activating enzyme]-L-cysteine + S-ubiquitinyl-[E2 ubiquitin-conjugating enzyme]-L-cysteine.. It functions in the pathway protein modification; protein ubiquitination. Its function is as follows. Catalyzes the covalent attachment of ubiquitin to other proteins. Plays a role in transcription regulation by catalyzing the monoubiquitination of histone H2B to form H2BK123ub1. H2BK123ub1 gives a specific tag for epigenetic transcriptional activation and is also a prerequisite for H3K4me and H3K79me formation. Also involved in postreplication repair of UV-damaged DNA, in N-end rule-dependent protein degradation and in sporulation. The protein is Ubiquitin-conjugating enzyme E2 2 (UBC2) of Eremothecium gossypii (strain ATCC 10895 / CBS 109.51 / FGSC 9923 / NRRL Y-1056) (Yeast).